Consider the following 343-residue polypeptide: UPF0324 membrane protein LJ_1117 (343 aa).

The next 10 membrane-spanning stretches (helical) occupy residues 10 to 27 (FGLA…GIFL), 32 to 54 (YVNL…VLPV), 64 to 86 (IGFI…LNLT), 91 to 113 (AGIK…TYWL), 123 to 145 (LAVL…VSPQ), 157 to 179 (NEVL…EIVI), 219 to 241 (ALIM…GYWY), 262 to 284 (IPWF…FPPV), 288 to 310 (GLVQ…SVNF), and 317 to 339 (GGTV…IIMS).

Belongs to the UPF0324 family.

The protein localises to the cell membrane. This is UPF0324 membrane protein LJ_1117 from Lactobacillus johnsonii (strain CNCM I-12250 / La1 / NCC 533).